The primary structure comprises 478 residues: PTS system mannitol-specific EIICB component (478 aa).

The Cytoplasmic portion of the chain corresponds to Met-1–Asn-29. In terms of domain architecture, PTS EIIC type-2 spans Phe-18–Glu-347. Residues Ile-30 to Asn-51 traverse the membrane as a helical segment. Topologically, residues Glu-52–Asn-55 are extracellular. Residues Thr-56–Lys-76 form a helical membrane-spanning segment. Topologically, residues Met-77–Phe-139 are cytoplasmic. The chain crosses the membrane as a helical span at residues Thr-140–Leu-161. The Extracellular segment spans residues Thr-162–Gly-170. A helical membrane pass occupies residues Val-171–Lys-191. Topologically, residues Val-192–Ala-278 are cytoplasmic. A helical membrane pass occupies residues Ala-279–Val-298. The Extracellular segment spans residues Ala-299–Tyr-318. Residues Phe-319–Leu-340 form a helical membrane-spanning segment. The Cytoplasmic segment spans residues Lys-341–Lys-478. The region spanning Asn-390–Lys-478 is the PTS EIIB type-2 domain. Cys-396 functions as the Phosphocysteine intermediate; for EIIB activity in the catalytic mechanism. At Cys-396 the chain carries Phosphocysteine; by EIIA.

In terms of assembly, homodimer.

Its subcellular location is the cell membrane. It catalyses the reaction D-mannitol(out) + N(pros)-phospho-L-histidyl-[protein] = D-mannitol 1-phosphate(in) + L-histidyl-[protein]. Its function is as follows. The phosphoenolpyruvate-dependent sugar phosphotransferase system (sugar PTS), a major carbohydrate active transport system, catalyzes the phosphorylation of incoming sugar substrates concomitantly with their translocation across the cell membrane. The enzyme II CmtAB PTS system is involved in D-mannitol transport. The chain is PTS system mannitol-specific EIICB component from Bacillus subtilis (strain 168).